The following is a 325-amino-acid chain: Tetraacyldisaccharide 4'-kinase (325 aa).

Residue 55-62 coordinates ATP; the sequence is TAGGNGKT.

The protein belongs to the LpxK family.

The enzyme catalyses a lipid A disaccharide + ATP = a lipid IVA + ADP + H(+). It functions in the pathway glycolipid biosynthesis; lipid IV(A) biosynthesis; lipid IV(A) from (3R)-3-hydroxytetradecanoyl-[acyl-carrier-protein] and UDP-N-acetyl-alpha-D-glucosamine: step 6/6. Transfers the gamma-phosphate of ATP to the 4'-position of a tetraacyldisaccharide 1-phosphate intermediate (termed DS-1-P) to form tetraacyldisaccharide 1,4'-bis-phosphate (lipid IVA). The polypeptide is Tetraacyldisaccharide 4'-kinase (Salmonella typhi).